The chain runs to 215 residues: High mobility group protein B1 (215 aa).

1–10 provides a ligand contact to heparin; that stretch reads MGKGDPKKPR. The tract at residues 1–97 is sufficient for interaction with HAVCR2; it reads MGKGDPKKPR…KFKDPNAPKR (97 aa). 4 positions are modified to N6-acetyllysine: Lys3, Lys7, Lys8, and Lys12. Residues 3–15 form an LPS binding (delipidated) region; that stretch reads KGDPKKPRGKMSS. The HMG box 1 DNA-binding region spans 9-79; sequence PRGKMSSYAF…RYEREMKTYI (71 aa). Cys23 is subject to Cysteine sulfonic acid (-SO3H); alternate. An intrachain disulfide couples Cys23 to Cys45. The Nuclear localization signal (NLS) 1 signature appears at 27 to 43; that stretch reads HKKKHPDASVNFSEFSK. An N6-acetyllysine mark is found at Lys28, Lys29, and Lys30. Lys28 is covalently cross-linked (Isoglutamyl lysine isopeptide (Lys-Gln) (interchain with Q-?)). Ser35 is modified (phosphoserine). Lys43 is subject to N6-acetyllysine. Residues Lys43 and Lys44 each participate in an isoglutamyl lysine isopeptide (Lys-Gln) (interchain with Q-?) cross-link. Cys45 bears the Cysteine sulfonic acid (-SO3H); alternate mark. Thr51 carries the phosphothreonine modification. An Isoglutamyl lysine isopeptide (Lys-Gln) (interchain with Q-?) cross-link involves residue Lys68. Residues 76-95 are disordered; sequence KTYIPPKGETKKKFKDPNAP. The segment at 80-96 is LPS binding (Lipid A); sequence PPKGETKKKFKDPNAPK. Over residues 83–94 the composition is skewed to basic and acidic residues; the sequence is GETKKKFKDPNA. A cytokine-stimulating activity region spans residues 89–108; sequence FKDPNAPKRPPSAFFLFCSE. The residue at position 90 (Lys90) is an N6-acetyllysine. The segment at residues 95 to 163 is a DNA-binding region (HMG box 2); the sequence is PKRPPSAFFL…KYEKDIAAYR (69 aa). Residue Ser100 is modified to Phosphoserine. Cys106 carries the cysteine sulfonic acid (-SO3H) modification. N6-acetyllysine occurs at positions 127, 128, 141, 172, 173, 177, and 180. The interval 150-183 is binding to AGER/RAGE; it reads KLKEKYEKDIAAYRAKGKPDAAKKGVVKAEKSKK. A compositionally biased stretch (basic and acidic residues) spans 162 to 179; sequence YRAKGKPDAAKKGVVKAE. The tract at residues 162–215 is disordered; sequence YRAKGKPDAAKKGVVKAEKSKKKKEEEEDEEDEEDEEEEEDEEDEEEEEDDDDE. Residues 178 to 184 carry the Nuclear localization signal (NLS) 2 motif; that stretch reads AEKSKKK. Lys180 is covalently cross-linked (Isoglutamyl lysine isopeptide (Lys-Gln) (interchain with Q-?)). Ser181 bears the ADP-ribosylserine mark. N6-acetyllysine is present on residues Lys182, Lys183, Lys184, and Lys185. Isoglutamyl lysine isopeptide (Lys-Gln) (interchain with Q-?) cross-links involve residues Lys182, Lys183, and Lys184. A compositionally biased stretch (acidic residues) spans 187-215; the sequence is EEEDEEDEEDEEEEEDEEDEEEEEDDDDE.

It belongs to the HMGB family. In terms of assembly, interacts (fully reduced HMGB1) with CXCL12; probably in a 1:2 ratio involving two molecules of CXCL12, each interacting with one HMG box of HMGB1; inhibited by glycyrrhizin. Associates with the TLR4:LY96 receptor complex. Component of the RAG complex composed of core components RAG1 and RAG2, and associated component HMGB1 or HMGB2. Interacts (in cytoplasm upon starvation) with BECN1; inhibits the interaction of BECN1 and BCL2 leading to promotion of autophagy. Interacts with KPNA1; involved in nuclear import. Interacts with SREBF1, TLR2, TLR4, TLR9, PTPRZ1, APEX1, FEN1, POLB, TERT. Interacts with IL1B, AGER, MSH2, XPA, XPC, HNF1A, TP53. Interacts with CD24; the probable CD24:SIGLEC10 complex is proposed to inhibit HGMB1-mediated tissue damage immune response. Interacts with THBD; prevents HGMB1 interaction with ACER/RAGE and inhibits HGMB1 pro-inflammatory activity. Interacts with HAVCR2; impairs HMGB1 binding to B-DNA and likely HMGB1-mediated innate immune response. Interacts with XPO1; mediating nuclear export. Interacts with receptor RAGE/AGER. Post-translationally, phosphorylated at serine residues. Phosphorylation in both NLS regions is required for cytoplasmic translocation followed by secretion. Phosphorylation at Thr-51 within the NLS is crucial for secretion induced by porcine reproductive and respiratory syndrome virus (PRRSV). In terms of processing, acetylated on multiple sites upon stimulation with LPS. Acetylation on lysine residues in the nuclear localization signals (NLS 1 and NLS 2) leads to cytoplasmic localization and subsequent secretion. Acetylation on Lys-3 results in preferential binding to DNA ends and impairs DNA bending activity. Reduction/oxidation of cysteine residues Cys-23, Cys-45 and Cys-106 and a possible intramolecular disulfide bond involving Cys-23 and Cys-45 give rise to different redox forms with specific functional activities in various cellular compartments: 1- fully reduced HMGB1 (HMGB1C23hC45hC106h), 2- disulfide HMGB1 (HMGB1C23-C45C106h) and 3- sulfonyl HMGB1 (HMGB1C23soC45soC106so). Post-translationally, poly-ADP-ribosylated by PARP1 when secreted following stimulation with LPS. In terms of processing, in vitro cleavage by CASP1 is liberating a HMG box 1-containing peptide which may mediate immunogenic activity; the peptide antagonizes apoptosis-induced immune tolerance. Can be proteolytically cleaved by a thrombin:thrombomodulin complex; reduces binding to heparin and pro-inflammatory activities. Forms covalent cross-links mediated by transglutaminase TGM2, between a glutamine and the epsilon-amino group of a lysine residue, forming homopolymers and heteropolymers.

Its subcellular location is the nucleus. It localises to the chromosome. It is found in the cytoplasm. The protein localises to the secreted. The protein resides in the cell membrane. Its subcellular location is the endosome. It localises to the endoplasmic reticulum-Golgi intermediate compartment. Its function is as follows. Multifunctional redox sensitive protein with various roles in different cellular compartments. In the nucleus is one of the major chromatin-associated non-histone proteins and acts as a DNA chaperone involved in replication, transcription, chromatin remodeling, V(D)J recombination, DNA repair and genome stability. Proposed to be an universal biosensor for nucleic acids. Promotes host inflammatory response to sterile and infectious signals and is involved in the coordination and integration of innate and adaptive immune responses. In the cytoplasm functions as a sensor and/or chaperone for immunogenic nucleic acids implicating the activation of TLR9-mediated immune responses, and mediates autophagy. Acts as a danger-associated molecular pattern (DAMP) molecule that amplifies immune responses during tissue injury. Released to the extracellular environment can bind DNA, nucleosomes, IL-1 beta, CXCL12, AGER isoform 2/sRAGE, lipopolysaccharide (LPS) and lipoteichoic acid (LTA), and activates cells through engagement of multiple surface receptors. In the extracellular compartment fully reduced HMGB1 (released by necrosis) acts as a chemokine, disulfide HMGB1 (actively secreted) as a cytokine, and sulfonyl HMGB1 (released from apoptotic cells) promotes immunological tolerance. Has proangiogenic activity. May be involved in platelet activation. Binds to phosphatidylserine and phosphatidylethanolamide. Bound to RAGE mediates signaling for neuronal outgrowth. May play a role in accumulation of expanded polyglutamine (polyQ) proteins. Functionally, nuclear functions are attributed to fully reduced HGMB1. Associates with chromatin and binds DNA with a preference to non-canonical DNA structures such as single-stranded DNA, DNA-containing cruciforms or bent structures, supercoiled DNA and ZDNA. Can bent DNA and enhance DNA flexibility by looping thus providing a mechanism to promote activities on various gene promoters by enhancing transcription factor binding and/or bringing distant regulatory sequences into close proximity. May be involved in nucleotide excision repair (NER), mismatch repair (MMR) and base excision repair (BER) pathways, and double strand break repair such as non-homologous end joining (NHEJ). Involved in V(D)J recombination by acting as a cofactor of the RAG complex: acts by stimulating cleavage and RAG protein binding at the 23 bp spacer of conserved recombination signal sequences (RSS). In vitro can displace histone H1 from highly bent DNA. Can restructure the canonical nucleosome leading to relaxation of structural constraints for transcription factor-binding. Enhances binding of sterol regulatory element-binding proteins (SREBPs) such as SREBF1 to their cognate DNA sequences and increases their transcriptional activities. Facilitates binding of TP53 to DNA. May be involved in mitochondrial quality control and autophagy in a transcription-dependent fashion implicating HSPB1. Can modulate the activity of the telomerase complex and may be involved in telomere maintenance. Represses porcine circovirus type 2 replication within the nucleus by binding to the Ori region of the viral genome. In the cytoplasm proposed to dissociate the BECN1:BCL2 complex via competitive interaction with BECN1 leading to autophagy activation. Can protect BECN1 and ATG5 from calpain-mediated cleavage and thus proposed to control their proautophagic and proapoptotic functions and to regulate the extent and severity of inflammation-associated cellular injury. In myeloid cells has a protective role against endotoxemia and bacterial infection by promoting autophagy. Involved in endosomal translocation and activation of TLR9 in response to CpG-DNA in macrophages. In terms of biological role, in the extracellular compartment (following either active secretion or passive release) involved in regulation of the inflammatory response. Fully reduced HGMB1 (which subsequently gets oxidized after release) in association with CXCL12 mediates the recruitment of inflammatory cells during the initial phase of tissue injury; the CXCL12:HMGB1 complex triggers CXCR4 homodimerization. Induces the migration of monocyte-derived immature dendritic cells and seems to regulate adhesive and migratory functions of neutrophils implicating AGER/RAGE and ITGAM. Can bind to various types of DNA and RNA including microbial unmethylated CpG-DNA to enhance the innate immune response to nucleic acids. Proposed to act in promiscuous DNA/RNA sensing which cooperates with subsequent discriminative sensing by specific pattern recognition receptors. Promotes extracellular DNA-induced AIM2 inflammasome activation implicating AGER/RAGE. Disulfide HMGB1 binds to transmembrane receptors, such as AGER/RAGE, TLR2, TLR4 and probably TREM1, thus activating their signal transduction pathways. Mediates the release of cytokines/chemokines such as TNF, IL-1, IL-6, IL-8, CCL2, CCL3, CCL4 and CXCL10. Promotes secretion of interferon-gamma by macrophage-stimulated natural killer (NK) cells in concert with other cytokines like IL-2 or IL-12. TLR4 is proposed to be the primary receptor promoting macrophage activation and signaling through TLR4 seems to implicate LY96/MD-2. In bacterial LPS- or LTA-mediated inflammatory responses binds to the endotoxins and transfers them to CD14 for signaling to the respective TLR4:LY96 and TLR2 complexes. Contributes to tumor proliferation by association with ACER/RAGE. Can bind to IL1-beta and signals through the IL1R1:IL1RAP receptor complex. Binding to class A CpG activates cytokine production in plasmacytoid dendritic cells implicating TLR9, MYD88 and AGER/RAGE and can activate autoreactive B cells. Via HMGB1-containing chromatin immune complexes may also promote B cell responses to endogenous TLR9 ligands through a B-cell receptor (BCR)-dependent and ACER/RAGE-independent mechanism. Inhibits phagocytosis of apoptotic cells by macrophages; the function is dependent on poly-ADP-ribosylation and involves binding to phosphatidylserine on the cell surface of apoptotic cells. In adaptive immunity may be involved in enhancing immunity through activation of effector T cells and suppression of regulatory T (TReg) cells. In contrast, without implicating effector or regulatory T-cells, required for tumor infiltration and activation of T-cells expressing the lymphotoxin LTA:LTB heterotrimer thus promoting tumor malignant progression. Also reported to limit proliferation of T-cells. Released HMGB1:nucleosome complexes formed during apoptosis can signal through TLR2 to induce cytokine production. Involved in induction of immunological tolerance by apoptotic cells; its pro-inflammatory activities when released by apoptotic cells are neutralized by reactive oxygen species (ROS)-dependent oxidation specifically on Cys-106. During macrophage activation by activated lymphocyte-derived self apoptotic DNA (ALD-DNA) promotes recruitment of ALD-DNA to endosomes. In Sus scrofa (Pig), this protein is High mobility group protein B1 (HMGB1).